We begin with the raw amino-acid sequence, 347 residues long: Endophilin-A3 (347 aa).

The interval 1–21 (MSVAGLKKQFHKASQLFSEKI) is membrane-binding amphipathic helix. The BAR domain occupies 18–249 (SEKISGAEGT…LELRISLASK (232 aa)). The interval 60 to 87 (PNPAYRAKLGMLNTVSKLRGQVKATGYP) is required for dimerization upon membrane association. A coiled-coil region spans residues 180-201 (EEEIRQAVEKFEESKELAERSM). The interaction with ARC stretch occupies residues 218–254 (FVEAALDYHRQSTEILQELQSKLELRISLASKVPKRE). The interval 255 to 288 (FMPKPVNMSSTDANGVGPSSSSKTPGTDTPADQP) is disordered. Polar residues predominate over residues 261 to 281 (NMSSTDANGVGPSSSSKTPGT). The SH3 domain occupies 285-344 (ADQPCCRGLYDFEPENEGELGFKEGDIITLTNQIDENWYEGMLRGESGFFPINYVEVIVP).

This sequence belongs to the endophilin family. As to quaternary structure, interacts with ARC, DNM1, SGIP1, SYNJ1 and DYDC1. Interacts with FASLG. Interacts with ATXN2. Interacts with BIN2.

It localises to the cytoplasm. It is found in the early endosome membrane. Its function is as follows. Implicated in endocytosis. May recruit other proteins to membranes with high curvature. This is Endophilin-A3 (Sh3gl3) from Mus musculus (Mouse).